The following is a 550-amino-acid chain: Glutamine--tRNA ligase (550 aa).

A 'HIGH' region motif is present at residues 34–44 (PEPNGYLHLGH). ATP contacts are provided by residues 35 to 37 (EPN) and 41 to 47 (HLGHAKS). The L-glutamine site is built by Asp-67 and Tyr-212. Residues Thr-231, 261-262 (RL), and 269-271 (LSK) contribute to the ATP site. The short motif at 268-272 (VLSKR) is the 'KMSKS' region element.

It belongs to the class-I aminoacyl-tRNA synthetase family. Monomer.

It is found in the cytoplasm. The enzyme catalyses tRNA(Gln) + L-glutamine + ATP = L-glutaminyl-tRNA(Gln) + AMP + diphosphate. The protein is Glutamine--tRNA ligase of Buchnera aphidicola subsp. Baizongia pistaciae (strain Bp).